A 244-amino-acid chain; its full sequence is Small ribosomal subunit protein uS2 (244 aa).

This sequence belongs to the universal ribosomal protein uS2 family.

The sequence is that of Small ribosomal subunit protein uS2 from Buchnera aphidicola subsp. Schizaphis graminum (strain Sg).